A 959-amino-acid polypeptide reads, in one-letter code: Lon protease homolog, mitochondrial (959 aa).

The transit peptide at 1–67 (MAASTGYVRL…GPAIGGQWRG (67 aa)) directs the protein to the mitochondrion. 2 disordered regions span residues 77-102 (GAFS…GSAG) and 218-257 (RQLE…HPAE). The span at 91–102 (EEGAGGAGGSAG) shows a compositional bias: gly residues. The Lon N-terminal domain occupies 124–370 (LPLIAITRNP…KALSLLKKEF (247 aa)). A compositionally biased stretch (basic residues) spans 233–243 (HKPRRKSKRGK). A compositionally biased stretch (basic and acidic residues) spans 244–256 (KEAEDELSARHPA). 523-530 (GPPGVGKT) contributes to the ATP binding site. Residues 759 to 949 (VTPPGVVMGL…REIFDIAFPD (191 aa)) enclose the Lon proteolytic domain. Catalysis depends on residues Ser-855 and Lys-898.

It belongs to the peptidase S16 family. Homohexamer. Organized in a ring with a central cavity. The ATP-binding and proteolytic domains (AP-domain) form a hexameric chamber, while the N-terminal domain is arranged as a trimer of dimers. DNA and RNA binding is stimulated by substrate and inhibited by ATP binding. Interacts with TWNK and mitochondrial DNA polymerase subunit POLG. Duodenum, heart, lung and liver, but not thymus.

It localises to the mitochondrion matrix. It carries out the reaction Hydrolysis of proteins in presence of ATP.. With respect to regulation, peptidase activity is subject to substrate inhibition by ATP. ATP-dependent serine protease that mediates the selective degradation of misfolded, unassembled or oxidatively damaged polypeptides as well as certain short-lived regulatory proteins in the mitochondrial matrix. Endogenous substrates include mitochondrial steroidogenic acute regulatory (StAR) protein, DELE1, helicase Twinkle (TWNK) and the large ribosomal subunit protein MRPL32/bL32m. MRPL32/bL32m is protected from degradation by LONP1 when it is bound to a nucleic acid (RNA), but TWNK is not. May also have a chaperone function in the assembly of inner membrane protein complexes. Participates in the regulation of mitochondrial gene expression and in the maintenance of the integrity of the mitochondrial genome. Binds to mitochondrial promoters and RNA in a single-stranded, site-specific, and strand-specific manner. May regulate mitochondrial DNA replication and/or gene expression using site-specific, single-stranded DNA binding to target the degradation of regulatory proteins binding to adjacent sites in mitochondrial promoters. This Homo sapiens (Human) protein is Lon protease homolog, mitochondrial.